Here is a 465-residue protein sequence, read N- to C-terminus: UDP-N-acetylmuramate--L-alanine ligase (465 aa).

112–118 (GTHGKTT) provides a ligand contact to ATP.

It belongs to the MurCDEF family.

The protein resides in the cytoplasm. The catalysed reaction is UDP-N-acetyl-alpha-D-muramate + L-alanine + ATP = UDP-N-acetyl-alpha-D-muramoyl-L-alanine + ADP + phosphate + H(+). It participates in cell wall biogenesis; peptidoglycan biosynthesis. In terms of biological role, cell wall formation. This Burkholderia vietnamiensis (strain G4 / LMG 22486) (Burkholderia cepacia (strain R1808)) protein is UDP-N-acetylmuramate--L-alanine ligase.